The sequence spans 618 residues: ADP,ATP carrier protein 2, chloroplastic (618 aa).

The transit peptide at 1–76 directs the protein to the chloroplast; that stretch reads MEGLIQTRGI…KERSRGFICK (76 aa). Position 77 is an N-acetylalanine (alanine 77). The next 11 helical transmembrane spans lie at 110-130, 148-168, 179-199, 237-257, 270-289, 312-332, 368-388, 401-421, 441-461, 464-484, and 542-562; these read LKKI…YTIL, IIPF…MLLY, ALFY…GFVM, LFYV…FWGF, FYPL…GRTV, AMMS…WWVN, LATL…TWKS, SAFM…MMLL, VLLL…PFAP, AKLG…QNIF, and LANS…AWLA. Residues 586–618 are disordered; sequence RASSVKIPVVSQEDAPSGETTSQLSEKSTPTGI. Residues 603 to 618 show a composition bias toward polar residues; sequence GETTSQLSEKSTPTGI.

Belongs to the ADP/ATP translocase tlc (TC 2.A.12.2) family.

It is found in the plastid. The protein localises to the chloroplast membrane. This chain is ADP,ATP carrier protein 2, chloroplastic (AATP2), found in Arabidopsis thaliana (Mouse-ear cress).